A 448-amino-acid polypeptide reads, in one-letter code: Elongation factor 1-alpha (448 aa).

The 226-residue stretch at 5-230 folds into the tr-type G domain; that stretch reads KIHISIVVIG…DQINEPKRPS (226 aa). Positions 14-21 are G1; sequence GHVDSGKS. Residue 14 to 21 participates in GTP binding; sequence GHVDSGKS. Residue lysine 55 is modified to N6,N6-dimethyllysine. The G2 stretch occupies residues 70–74; it reads GITID. An N6,N6,N6-trimethyllysine modification is found at lysine 79. The interval 91-94 is G3; it reads DAPG. Residues 91-95 and 153-156 each bind GTP; these read DAPGH and NKMD. The tract at residues 153 to 156 is G4; sequence NKMD. N6,N6,N6-trimethyllysine is present on lysine 187. The interval 194–196 is G5; the sequence is SGF. Lysine 261 is modified (N6-methyllysine). A 5-glutamyl glycerylphosphorylethanolamine modification is found at glutamate 289. Position 306 is an N6,N6,N6-trimethyllysine (lysine 306). Glutamate 362 is modified (5-glutamyl glycerylphosphorylethanolamine). Lysine 396 carries the post-translational modification N6,N6,N6-trimethyllysine.

It belongs to the TRAFAC class translation factor GTPase superfamily. Classic translation factor GTPase family. EF-Tu/EF-1A subfamily.

It localises to the cytoplasm. Its function is as follows. This protein promotes the GTP-dependent binding of aminoacyl-tRNA to the A-site of ribosomes during protein biosynthesis. The chain is Elongation factor 1-alpha from Solanum lycopersicum (Tomato).